A 268-amino-acid chain; its full sequence is Phosphatidylglycerol--prolipoprotein diacylglyceryl transferase (268 aa).

Transmembrane regions (helical) follow at residues 14-34 (LGPI…FAGW), 57-77 (LTFY…IIFY), 90-110 (FFLW…LIAF), and 117-137 (IGAN…IGLG). Arg-140 serves as a coordination point for a 1,2-diacyl-sn-glycero-3-phospho-(1'-sn-glycerol). The next 3 helical transmembrane spans lie at 174 to 194 (QLFE…LVTI), 200 to 220 (YLVL…CEFF), and 240 to 260 (ILSI…FIKI).

It belongs to the Lgt family.

It localises to the cell inner membrane. The catalysed reaction is L-cysteinyl-[prolipoprotein] + a 1,2-diacyl-sn-glycero-3-phospho-(1'-sn-glycerol) = an S-1,2-diacyl-sn-glyceryl-L-cysteinyl-[prolipoprotein] + sn-glycerol 1-phosphate + H(+). It functions in the pathway protein modification; lipoprotein biosynthesis (diacylglyceryl transfer). Catalyzes the transfer of the diacylglyceryl group from phosphatidylglycerol to the sulfhydryl group of the N-terminal cysteine of a prolipoprotein, the first step in the formation of mature lipoproteins. In Francisella tularensis subsp. tularensis (strain FSC 198), this protein is Phosphatidylglycerol--prolipoprotein diacylglyceryl transferase.